We begin with the raw amino-acid sequence, 368 residues long: Peptide chain release factor 2 (368 aa).

Gln250 bears the N5-methylglutamine mark.

The protein belongs to the prokaryotic/mitochondrial release factor family. Methylated by PrmC. Methylation increases the termination efficiency of RF2.

It localises to the cytoplasm. Its function is as follows. Peptide chain release factor 2 directs the termination of translation in response to the peptide chain termination codons UGA and UAA. The sequence is that of Peptide chain release factor 2 from Chlamydia trachomatis serovar L2 (strain ATCC VR-902B / DSM 19102 / 434/Bu).